The chain runs to 504 residues: Prenylcysteine oxidase 1 (504 aa).

An N-terminal signal peptide occupies residues 1-28; that stretch reads MGRFAATLVGSLFGLGLLLCGLGRLASA. N-linked (GlcNAc...) asparagine glycans are attached at residues N196, N322, and N352.

It belongs to the prenylcysteine oxidase family. It depends on FAD as a cofactor. Expressed mainly in cerebrum.

The protein localises to the lysosome. The enzyme catalyses an S-polyprenyl-L-cysteine + O2 + H2O = a polyprenal + L-cysteine + H2O2. It carries out the reaction S-(2E,6E)-farnesyl-L-cysteine + O2 + H2O = (2E,6E)-farnesal + L-cysteine + H2O2. The catalysed reaction is [(2E,6E,10E)-geranylgeranyl]-L-cysteine + O2 + H2O = (2E,6E,10E)-geranylgeranial + L-cysteine + H2O2. Functionally, prenylcysteine oxidase that cleaves the thioether bond of prenyl-L-cysteines, such as farnesylcysteine and geranylgeranylcysteine. Only active against free prenylcysteines and not prenylcysteine residues within prenylated proteins or peptides. Involved in the final step in the degradation of prenylated proteins, by degrading prenylcysteines after the protein has been degraded. This Rattus norvegicus (Rat) protein is Prenylcysteine oxidase 1.